A 307-amino-acid chain; its full sequence is O-acetylserine dependent cystathionine beta-synthase (307 aa).

An N6-(pyridoxal phosphate)lysine modification is found at lysine 44. Residues asparagine 74, 178-182 (GSGGT), and serine 265 contribute to the pyridoxal 5'-phosphate site.

It belongs to the cysteine synthase/cystathionine beta-synthase family. Requires pyridoxal 5'-phosphate as cofactor.

The catalysed reaction is O-acetyl-L-serine + L-homocysteine = L,L-cystathionine + acetate + H(+). In terms of biological role, catalyzes the conversion of O-acetylserine and homocysteine to cystathionine. The chain is O-acetylserine dependent cystathionine beta-synthase (mccA) from Bacillus subtilis (strain 168).